Consider the following 336-residue polypeptide: Cell division protein ZipA (336 aa).

At 1 to 6 (MEDLQL) the chain is on the periplasmic side. A helical membrane pass occupies residues 7–27 (VLFVLGAIAIIAVLVHGFWSI). The Cytoplasmic segment spans residues 28–336 (RKQQPKPIKE…DYLRRIKAIV (309 aa)). 2 disordered regions span residues 31–118 (QPKP…PVRA) and 174–200 (YGAT…EPLG). The span at 73–91 (LPSSRNHTSVPVMTLQKAS) shows a compositional bias: polar residues. Positions 108 to 118 (TTAERAEPVRA) are enriched in basic and acidic residues. Residues 179 to 193 (QASPQPASPVQSQAP) show a composition bias toward low complexity.

Belongs to the ZipA family. As to quaternary structure, interacts with FtsZ via their C-terminal domains.

It localises to the cell inner membrane. Its function is as follows. Essential cell division protein that stabilizes the FtsZ protofilaments by cross-linking them and that serves as a cytoplasmic membrane anchor for the Z ring. Also required for the recruitment to the septal ring of downstream cell division proteins. This is Cell division protein ZipA from Shewanella denitrificans (strain OS217 / ATCC BAA-1090 / DSM 15013).